Reading from the N-terminus, the 357-residue chain is Homoserine kinase (357 aa).

This sequence belongs to the GHMP kinase family. Homoserine kinase subfamily.

It carries out the reaction L-homoserine + ATP = O-phospho-L-homoserine + ADP + H(+). It functions in the pathway amino-acid biosynthesis; L-threonine biosynthesis; L-threonine from L-aspartate: step 4/5. Commits homoserine to the threonine biosynthesis pathway by catalyzing its O-phosphorylation. The chain is Homoserine kinase from Cryptococcus neoformans var. grubii serotype A (strain H99 / ATCC 208821 / CBS 10515 / FGSC 9487) (Filobasidiella neoformans var. grubii).